A 113-amino-acid polypeptide reads, in one-letter code: UPF0145 protein TK1926 (113 aa).

This sequence belongs to the UPF0145 family.

The chain is UPF0145 protein TK1926 from Thermococcus kodakarensis (strain ATCC BAA-918 / JCM 12380 / KOD1) (Pyrococcus kodakaraensis (strain KOD1)).